The following is a 307-amino-acid chain: N-acetylneuraminate lyase (307 aa).

Aceneuramate-binding residues include Thr51 and Thr52. Tyr143 acts as the Proton donor in catalysis. Lys173 serves as the catalytic Schiff-base intermediate with substrate. Ser175, Gly199, Asp201, Glu202, and Ser218 together coordinate aceneuramate.

The protein belongs to the DapA family. NanA subfamily. As to quaternary structure, homotetramer.

Its subcellular location is the cytoplasm. It carries out the reaction aceneuramate = aldehydo-N-acetyl-D-mannosamine + pyruvate. It participates in amino-sugar metabolism; N-acetylneuraminate degradation. In terms of biological role, catalyzes the cleavage of N-acetylneuraminic acid (sialic acid) to form pyruvate and N-acetylmannosamine via a Schiff base intermediate. It prevents sialic acids from being recycled and returning to the cell surface. Involved in the N-glycolylneuraminic acid (Neu5Gc) degradation pathway. The sequence is that of N-acetylneuraminate lyase from Danio rerio (Zebrafish).